A 529-amino-acid chain; its full sequence is Peptide chain release factor 3 (529 aa).

The tr-type G domain maps to 10–278; it reads ARRRTFAIIS…NFVDLAPAPR (269 aa). GTP-binding positions include 19–26, 87–91, and 141–144; these read SHPDAGKT, DTPGH, and NKLD.

It belongs to the TRAFAC class translation factor GTPase superfamily. Classic translation factor GTPase family. PrfC subfamily.

Its subcellular location is the cytoplasm. Its function is as follows. Increases the formation of ribosomal termination complexes and stimulates activities of RF-1 and RF-2. It binds guanine nucleotides and has strong preference for UGA stop codons. It may interact directly with the ribosome. The stimulation of RF-1 and RF-2 is significantly reduced by GTP and GDP, but not by GMP. This chain is Peptide chain release factor 3, found in Nitratidesulfovibrio vulgaris (strain ATCC 29579 / DSM 644 / CCUG 34227 / NCIMB 8303 / VKM B-1760 / Hildenborough) (Desulfovibrio vulgaris).